The chain runs to 316 residues: Ribosomal protein L11 methyltransferase (316 aa).

S-adenosyl-L-methionine is bound by residues threonine 157, glycine 178, aspartate 200, and asparagine 243.

This sequence belongs to the methyltransferase superfamily. PrmA family.

The protein resides in the cytoplasm. The enzyme catalyses L-lysyl-[protein] + 3 S-adenosyl-L-methionine = N(6),N(6),N(6)-trimethyl-L-lysyl-[protein] + 3 S-adenosyl-L-homocysteine + 3 H(+). Methylates ribosomal protein L11. The sequence is that of Ribosomal protein L11 methyltransferase from Streptococcus pneumoniae serotype 2 (strain D39 / NCTC 7466).